A 97-amino-acid polypeptide reads, in one-letter code: Large ribosomal subunit protein eL21 (97 aa).

Over residues 1–12 (MPSSNGPRQATR) the composition is skewed to polar residues. The interval 1–35 (MPSSNGPRQATRNKLKNDARERGTSPPQRSIEEYD) is disordered.

The protein belongs to the eukaryotic ribosomal protein eL21 family.

This Natronomonas pharaonis (strain ATCC 35678 / DSM 2160 / CIP 103997 / JCM 8858 / NBRC 14720 / NCIMB 2260 / Gabara) (Halobacterium pharaonis) protein is Large ribosomal subunit protein eL21.